The chain runs to 216 residues: Endoplasmic reticulum vesicle protein 25 (216 aa).

Residues 1–20 (MASLKSLLSGFLLLAGAAQA) form the signal peptide. The Lumenal segment spans residues 21 to 185 (LKFDLEATSS…TNESTNNRVK (165 aa)). The region spanning 36–126 (RRCIRNFVNK…RRHVELDIDI (91 aa)) is the GOLD domain. A helical transmembrane segment spans residues 186 to 206 (WFGMATTFLLIALWGWQIMYL). Residues 207–216 (RAYFRSKHLI) lie on the Cytoplasmic side of the membrane.

The protein belongs to the EMP24/GP25L family.

It is found in the endoplasmic reticulum membrane. The protein localises to the golgi apparatus membrane. In terms of biological role, constituent of COPII-coated endoplasmic reticulum-derived transport vesicles. Required for efficient transport of a subset of secretory proteins to the Golgi. Facilitates retrograde transport from the Golgi to the endoplasmic reticulum. The polypeptide is Endoplasmic reticulum vesicle protein 25 (erv-1) (Neurospora crassa (strain ATCC 24698 / 74-OR23-1A / CBS 708.71 / DSM 1257 / FGSC 987)).